The following is a 575-amino-acid chain: Serine/threonine-protein kinase YPK1 (575 aa).

Positions 1–53 (MMSWKFGKKFKEGGFLSGKHHSSNNNSPSDTSRSTTPTPGNPHPEDAVKPPVP) are disordered. A compositionally biased stretch (low complexity) spans 23-38 (SNNNSPSDTSRSTTPT). Residues 245-500 (FELLKVIGKG…AQDIKNHPFF (256 aa)) form the Protein kinase domain. ATP contacts are provided by residues 251-259 (IGKGSFGKV) and Lys274. The Proton acceptor role is filled by Asp368. One can recognise an AGC-kinase C-terminal domain in the interval 502–573 (KHINFTKLWN…SVSPLGESVG (72 aa)). Phosphoserine occurs at positions 543 and 562.

It belongs to the protein kinase superfamily. AGC Ser/Thr protein kinase family. RAC subfamily.

It carries out the reaction L-seryl-[protein] + ATP = O-phospho-L-seryl-[protein] + ADP + H(+). The enzyme catalyses L-threonyl-[protein] + ATP = O-phospho-L-threonyl-[protein] + ADP + H(+). In terms of biological role, probable serine/threonine-protein kinase which may act in the sphingolipid-mediated signaling pathway. May act downstream of TORC2 (TOR complex 2) and PDK1 to regulate sphingolipid metabolism. This chain is Serine/threonine-protein kinase YPK1, found in Cryptococcus neoformans var. grubii serotype A (strain H99 / ATCC 208821 / CBS 10515 / FGSC 9487) (Filobasidiella neoformans var. grubii).